We begin with the raw amino-acid sequence, 121 residues long: Large ribosomal subunit protein bL19 (121 aa).

It belongs to the bacterial ribosomal protein bL19 family.

Its function is as follows. This protein is located at the 30S-50S ribosomal subunit interface and may play a role in the structure and function of the aminoacyl-tRNA binding site. This is Large ribosomal subunit protein bL19 from Bifidobacterium adolescentis (strain ATCC 15703 / DSM 20083 / NCTC 11814 / E194a).